Reading from the N-terminus, the 204-residue chain is Holliday junction branch migration complex subunit RuvA (204 aa).

Residues 1-67 (MIDYLYGTLD…GGVISLYGFF (67 aa)) form a domain I region. Positions 68 to 149 (TIEEREMYLL…TVNVLNKEKQ (82 aa)) are domain II. Residues 150 to 154 (TGAET) are flexible linker. A domain III region spans residues 155–204 (IKNTMVSEAIAGLITLGYKMQQARVAVTNVYEHNENITLEDLIKKSLQYL).

The protein belongs to the RuvA family. Homotetramer. Forms an RuvA(8)-RuvB(12)-Holliday junction (HJ) complex. HJ DNA is sandwiched between 2 RuvA tetramers; dsDNA enters through RuvA and exits via RuvB. An RuvB hexamer assembles on each DNA strand where it exits the tetramer. Each RuvB hexamer is contacted by two RuvA subunits (via domain III) on 2 adjacent RuvB subunits; this complex drives branch migration. In the full resolvosome a probable DNA-RuvA(4)-RuvB(12)-RuvC(2) complex forms which resolves the HJ.

Its subcellular location is the cytoplasm. In terms of biological role, the RuvA-RuvB-RuvC complex processes Holliday junction (HJ) DNA during genetic recombination and DNA repair, while the RuvA-RuvB complex plays an important role in the rescue of blocked DNA replication forks via replication fork reversal (RFR). RuvA specifically binds to HJ cruciform DNA, conferring on it an open structure. The RuvB hexamer acts as an ATP-dependent pump, pulling dsDNA into and through the RuvAB complex. HJ branch migration allows RuvC to scan DNA until it finds its consensus sequence, where it cleaves and resolves the cruciform DNA. This is Holliday junction branch migration complex subunit RuvA from Endomicrobium trichonymphae.